The primary structure comprises 638 residues: Adhesion G-protein coupled receptor F2 (638 aa).

Residues 1-25 (MISARWLYCLVLLLATESCRLFCQA) form the signal peptide. The Extracellular segment spans residues 26–386 (ASKSKENVMP…ESPVLTYITY (361 aa)). Asn155, Asn219, Asn248, Asn293, and Asn311 each carry an N-linked (GlcNAc...) asparagine glycan. The GAIN-B domain maps to 233–377 (PRNSLGKNFT…SILMSPNTVE (145 aa)). 2 disulfides stabilise this stretch: Cys329-Cys356 and Cys344-Cys358. The segment at 329–377 (CVGWHSLESRWDRRACKMIQENSRQAICRCQPNKFFTSFSILMSPNTVE) is GPS. Residues 387–407 (IGLGISICSLIICLAIEALVW) form a helical membrane-spanning segment. Residues 408–422 (SQVTKTEISYLRHLC) are Cytoplasmic-facing. A helical membrane pass occupies residues 423–443 (IANIAVTLLMADVWFIVASFL). Residues 444–465 (SGPIVHHNGCVTATFFVHFFYL) lie on the Extracellular side of the membrane. Residues 466–486 (SVFFWMLAKALLILYGILIVF) traverse the membrane as a helical segment. At 487-493 (HTLPKSC) the chain is on the cytoplasmic side. A helical membrane pass occupies residues 494-514 (LVASLFTVGYGCPLVIAVITL). Topologically, residues 515–541 (AVTEPGKGYLRPEACWLNWDMTKALLA) are extracellular. A helical transmembrane segment spans residues 542-562 (FVVPALAIVVVNLITVTLVII). The Cytoplasmic segment spans residues 563 to 586 (KTQRAAVGSSMFQEVRAIVRICKN). A helical transmembrane segment spans residues 587–607 (IAILTPLLGLTWGFGIATVVA). Residues 608–610 (GHS) lie on the Extracellular side of the membrane. Residues 611–631 (LAFHIIFSLLNALQVSPDAMI) traverse the membrane as a helical segment. Over 632–638 (ESEWRGC) the chain is Cytoplasmic.

The protein belongs to the G-protein coupled receptor 2 family. Adhesion G-protein coupled receptor (ADGR) subfamily.

It localises to the membrane. In terms of biological role, orphan receptor. The polypeptide is Adhesion G-protein coupled receptor F2 (Adgrf2) (Rattus norvegicus (Rat)).